We begin with the raw amino-acid sequence, 212 residues long: Ribonuclease HII (212 aa).

Residues 22–211 (GLVAGVDEVG…VADRILLQNT (190 aa)) enclose the RNase H type-2 domain. Positions 28, 29, and 120 each coordinate a divalent metal cation.

Belongs to the RNase HII family. Requires Mn(2+) as cofactor. It depends on Mg(2+) as a cofactor.

The protein localises to the cytoplasm. It carries out the reaction Endonucleolytic cleavage to 5'-phosphomonoester.. Its function is as follows. Endonuclease that specifically degrades the RNA of RNA-DNA hybrids. This chain is Ribonuclease HII, found in Shewanella frigidimarina (strain NCIMB 400).